Reading from the N-terminus, the 447-residue chain is Keratin, type I cytoskeletal 15 (447 aa).

Positions 1–93 are head; the sequence is MATTFLQTSS…GGDGGLLSGN (93 aa). A phosphoserine mark is found at S16, S28, S33, and S47. The segment at 94–129 is coil 1A; it reads EKVTMQNLNDRLASYLDKVRALEEANTELEVKIRDW. One can recognise an IF rod domain in the interval 94–406; it reads EKVTMQNLND…NLLEGQDAKM (313 aa). T120 carries the phosphothreonine modification. The tract at residues 130 to 148 is linker 1; sequence YQKQSPASPDRDYSHYFKT. The interval 149–240 is coil 1B; the sequence is MEEIRDKILA…KNHEEEMKEF (92 aa). Positions 241-260 are linker 12; that stretch reads SSQLAGQVNVEMDAAPGVDL. The interval 261–402 is coil 2; it reads TRMLAEMREQ…STYRNLLEGQ (142 aa). A Glycyl lysine isopeptide (Lys-Gly) (interchain with G-Cter in SUMO2) cross-link involves residue K289. 2 positions are modified to phosphothreonine: T290 and T312. Residues 403-447 form a tail region; sequence DAKMAAIGVREASLRGGSSGGGSNFHISVEESVDGKVVSSRKRES. K438 is covalently cross-linked (Glycyl lysine isopeptide (Lys-Gly) (interchain with G-Cter in SUMO1); alternate). K438 participates in a covalent cross-link: Glycyl lysine isopeptide (Lys-Gly) (interchain with G-Cter in SUMO2); alternate.

It belongs to the intermediate filament family. In terms of assembly, heterotetramer of two type I and two type II keratins. Forms a heterodimer with KRT14. Interacts with NOD2.

The sequence is that of Keratin, type I cytoskeletal 15 from Rattus norvegicus (Rat).